The primary structure comprises 116 residues: Protein TRACHEARY ELEMENT DIFFERENTIATION-RELATED 6 (116 aa).

The Extracellular segment spans residues 1 to 24; it reads MASTDSVYRPTPTPDHDTTVVVVV. The chain crosses the membrane as a helical span at residues 25-45; that stretch reads FVSLGCVMFLAFLAFVIWFLI. Topologically, residues 46 to 116 are cytoplasmic; that stretch reads KKRSRKHRER…GVGSSVVSRS (71 aa).

In terms of assembly, interacts with CESA7/IRX3, a subunit of the secondary cell wall (SCW)-related cellulose synthase complex. In terms of tissue distribution, expressed preferentially in differentiating vessel elements in seedlings.

Its subcellular location is the cell membrane. The protein resides in the secreted. The protein localises to the cell wall. In terms of biological role, involved in the secondary cell wall (SCW) formation of vessel elements (e.g. protoxylem and metaxylem), thus promoting tracheary element (TE) differentiation. In Arabidopsis thaliana (Mouse-ear cress), this protein is Protein TRACHEARY ELEMENT DIFFERENTIATION-RELATED 6.